The sequence spans 214 residues: External core antigen (214 aa).

The signal sequence occupies residues 1–19 (MQLFHLCLIISCTCPTVQA). Positions 25–27 (GWL) are HBEAG. Positions 165–214 (NAPILSTLPETTVVRRRDRGRSPRRRTPSPRRRRSQSPRRRRSQSRESQC) are disordered. A compositionally biased stretch (basic residues) spans 178 to 207 (VRRRDRGRSPRRRTPSPRRRRSQSPRRRRS). Residues 186–192 (SPRRRTP) form a 1; half-length repeat. Residues 186–208 (SPRRRTPSPRRRRSQSPRRRRSQ) are 3 X 8 AA repeats of S-P-R-R-R-R-S-Q. A propeptide spanning residues 186 to 214 (SPRRRTPSPRRRRSQSPRRRRSQSRESQC) is cleaved from the precursor. Repeat copies occupy residues 193–200 (SPRRRRSQ) and 201–208 (SPRRRRSQ).

It belongs to the orthohepadnavirus precore antigen family. Homodimerizes. Phosphorylated. Post-translationally, cleaved by host furin.

The protein resides in the secreted. It is found in the host nucleus. Functionally, may regulate immune response to the intracellular capsid in acting as a T-cell tolerogen, by having an immunoregulatory effect which prevents destruction of infected cells by cytotoxic T-cells. This immune regulation may predispose to chronicity during perinatal infections and prevent severe liver injury during adult infections. In Homo sapiens (Human), this protein is External core antigen.